The primary structure comprises 828 residues: DNA gyrase subunit A (828 aa).

One can recognise a Topo IIA-type catalytic domain in the interval 32-497; that stretch reads LPDVRDGLKP…EVLSLEDEDL (466 aa). The O-(5'-phospho-DNA)-tyrosine intermediate role is filled by Tyr120. Positions 524–530 match the GyrA-box motif; it reads QKRGGRG.

Belongs to the type II topoisomerase GyrA/ParC subunit family. In terms of assembly, heterotetramer, composed of two GyrA and two GyrB chains. In the heterotetramer, GyrA contains the active site tyrosine that forms a transient covalent intermediate with DNA, while GyrB binds cofactors and catalyzes ATP hydrolysis.

The protein resides in the cytoplasm. The catalysed reaction is ATP-dependent breakage, passage and rejoining of double-stranded DNA.. In terms of biological role, a type II topoisomerase that negatively supercoils closed circular double-stranded (ds) DNA in an ATP-dependent manner to modulate DNA topology and maintain chromosomes in an underwound state. Negative supercoiling favors strand separation, and DNA replication, transcription, recombination and repair, all of which involve strand separation. Also able to catalyze the interconversion of other topological isomers of dsDNA rings, including catenanes and knotted rings. Type II topoisomerases break and join 2 DNA strands simultaneously in an ATP-dependent manner. The sequence is that of DNA gyrase subunit A from Streptococcus pyogenes serotype M6 (strain ATCC BAA-946 / MGAS10394).